Consider the following 279-residue polypeptide: MLIIELLKAIFFGIIEGITEWLPVSSTGHLILVQEFIRLNQDKAFIEMFNIVIQLGAIIAVMLIYFERLNPFQPGKTAREVQLTWQLWLKVVIACIPSILIAVPLDNWFEAHFYFMVPIAIALIVYGIAFIWIEKQNAQQEPAVTDLARMSYKTAFFIGCFQVLSIVPGTSRSGATILGAIILGTSRTVAADFTFFLAIPTMFGYSGLKAVKFFLDGHHLDFAQVLILLVASLTAFVVSLLAIRFLTHYVKKHDFTIFGKYRIVLGSLLLIYSFFKFVF.

8 consecutive transmembrane segments (helical) span residues 2–22, 44–64, 85–105, 113–133, 163–183, 188–208, 223–243, and 255–275; these read LIIE…TEWL, AFIE…VMLI, WQLW…AVPL, FYFM…FIWI, VLSI…AIIL, TVAA…YSGL, AQVL…LLAI, and FTIF…YSFF.

Belongs to the UppP family.

Its subcellular location is the cell membrane. The enzyme catalyses di-trans,octa-cis-undecaprenyl diphosphate + H2O = di-trans,octa-cis-undecaprenyl phosphate + phosphate + H(+). Functionally, catalyzes the dephosphorylation of undecaprenyl diphosphate (UPP). Confers resistance to bacitracin. The sequence is that of Undecaprenyl-diphosphatase from Streptococcus pyogenes serotype M12 (strain MGAS2096).